A 182-amino-acid chain; its full sequence is Peptidyl-tRNA hydrolase (182 aa).

Y14 serves as a coordination point for tRNA. H19 acts as the Proton acceptor in catalysis. Residues Y65, N67, and N113 each coordinate tRNA.

Belongs to the PTH family. As to quaternary structure, monomer.

It localises to the cytoplasm. The enzyme catalyses an N-acyl-L-alpha-aminoacyl-tRNA + H2O = an N-acyl-L-amino acid + a tRNA + H(+). Hydrolyzes ribosome-free peptidyl-tRNAs (with 1 or more amino acids incorporated), which drop off the ribosome during protein synthesis, or as a result of ribosome stalling. In terms of biological role, catalyzes the release of premature peptidyl moieties from peptidyl-tRNA molecules trapped in stalled 50S ribosomal subunits, and thus maintains levels of free tRNAs and 50S ribosomes. The sequence is that of Peptidyl-tRNA hydrolase from Rickettsia peacockii (strain Rustic).